Consider the following 186-residue polypeptide: Adenine phosphoribosyltransferase (186 aa).

Belongs to the purine/pyrimidine phosphoribosyltransferase family. As to quaternary structure, homodimer.

Its subcellular location is the cytoplasm. It carries out the reaction AMP + diphosphate = 5-phospho-alpha-D-ribose 1-diphosphate + adenine. The protein operates within purine metabolism; AMP biosynthesis via salvage pathway; AMP from adenine: step 1/1. In terms of biological role, catalyzes a salvage reaction resulting in the formation of AMP, that is energically less costly than de novo synthesis. The sequence is that of Adenine phosphoribosyltransferase from Xanthomonas oryzae pv. oryzae (strain PXO99A).